Consider the following 282-residue polypeptide: Bis(5'-nucleosyl)-tetraphosphatase, symmetrical (282 aa).

It belongs to the Ap4A hydrolase family.

It carries out the reaction P(1),P(4)-bis(5'-adenosyl) tetraphosphate + H2O = 2 ADP + 2 H(+). In terms of biological role, hydrolyzes diadenosine 5',5'''-P1,P4-tetraphosphate to yield ADP. The chain is Bis(5'-nucleosyl)-tetraphosphatase, symmetrical from Escherichia coli O127:H6 (strain E2348/69 / EPEC).